Reading from the N-terminus, the 257-residue chain is 1-(5-phosphoribosyl)-5-[(5-phosphoribosylamino)methylideneamino] imidazole-4-carboxamide isomerase (257 aa).

D8 acts as the Proton acceptor in catalysis. The Proton donor role is filled by D129.

It belongs to the HisA/HisF family.

Its subcellular location is the cytoplasm. The catalysed reaction is 1-(5-phospho-beta-D-ribosyl)-5-[(5-phospho-beta-D-ribosylamino)methylideneamino]imidazole-4-carboxamide = 5-[(5-phospho-1-deoxy-D-ribulos-1-ylimino)methylamino]-1-(5-phospho-beta-D-ribosyl)imidazole-4-carboxamide. It functions in the pathway amino-acid biosynthesis; L-histidine biosynthesis; L-histidine from 5-phospho-alpha-D-ribose 1-diphosphate: step 4/9. The polypeptide is 1-(5-phosphoribosyl)-5-[(5-phosphoribosylamino)methylideneamino] imidazole-4-carboxamide isomerase (Thermosynechococcus vestitus (strain NIES-2133 / IAM M-273 / BP-1)).